Reading from the N-terminus, the 670-residue chain is Protein angel homolog 1 (670 aa).

Phosphoserine is present on residues Ser77 and Ser105.

It belongs to the CCR4/nocturin family.

This chain is Protein angel homolog 1 (ANGEL1), found in Homo sapiens (Human).